Reading from the N-terminus, the 330-residue chain is Zinc finger protein sdz-12 (330 aa).

C2H2-type zinc fingers lie at residues 27–48 (PQCQ…HMKH), 63–85 (FRCE…QITH), 91–113 (KKCS…LHNH), 120–144 (FDCP…LVNH), and 153–176 (APCG…HFDH). Residues 183 to 195 (SAPAPTSSARLSP) show a composition bias toward low complexity. The tract at residues 183–203 (SAPAPTSSARLSPITVSTSGS) is disordered. The C2H2-type 6 zinc-finger motif lies at 271-293 (FECKHCTIKFHDATMSIMHNALH).

It belongs to the krueppel C2H2-type zinc-finger protein family. In terms of tissue distribution, expressed in the somatic gonad.

Together with ehn-3, may play a role in gonadogenesis. This Caenorhabditis elegans protein is Zinc finger protein sdz-12.